Reading from the N-terminus, the 179-residue chain is Replicase large subunit (179 aa).

Belongs to the ssRNA positive-strand viruses RNA-directed RNA polymerase family.

It carries out the reaction RNA(n) + a ribonucleoside 5'-triphosphate = RNA(n+1) + diphosphate. It catalyses the reaction ATP + H2O = ADP + phosphate + H(+). Its function is as follows. Replicase large subunit: is an RNA-dependent RNA polymerase active in viral RNA replication. This Tobacco rattle virus (strain PSG) protein is Replicase large subunit.